We begin with the raw amino-acid sequence, 225 residues long: UPF0758 protein Ssed_0385 (225 aa).

One can recognise an MPN domain in the interval 102-224 (ILSDPDLTRD…IVSFAERGWI (123 aa)). Residues His-173, His-175, and Asp-186 each coordinate Zn(2+). The JAMM motif signature appears at 173–186 (HNHPSGVAEPSLAD).

The protein belongs to the UPF0758 family.

The sequence is that of UPF0758 protein Ssed_0385 from Shewanella sediminis (strain HAW-EB3).